We begin with the raw amino-acid sequence, 91 residues long: C-C motif chemokine 5 (91 aa).

The N-terminal stretch at 1–23 (MKVFAAALAVILATATFCTPASA) is a signal peptide. 2 disulfide bridges follow: C33–C57 and C34–C73.

This sequence belongs to the intercrine beta (chemokine CC) family.

Its subcellular location is the secreted. Chemoattractant for blood monocytes, memory T-helper cells and eosinophils. Causes the release of histamine from basophils and activates eosinophils. May activate several chemokine receptors including CCR1, CCR3, CCR4 and CCR5. May also be an agonist of the G protein-coupled receptor GPR75. Together with GPR75, may play a role in neuron survival through activation of a downstream signaling pathway involving the PI3, Akt and MAP kinases. By activating GPR75 may also play a role in insulin secretion by islet cells. This Equus caballus (Horse) protein is C-C motif chemokine 5 (CCL5).